Consider the following 217-residue polypeptide: FGFR1 oncogene partner 2 homolog (217 aa).

2 coiled-coil regions span residues 6–106 (TIEK…MSKY) and 163–188 (KEQERIIQLEQENKGLREILQITRES). A disordered region spans residues 194-217 (KEDASESTSLSGLVTSSDLSLRKS). Polar residues predominate over residues 199 to 217 (ESTSLSGLVTSSDLSLRKS).

This sequence belongs to the SIKE family.

Its subcellular location is the cytoplasm. This chain is FGFR1 oncogene partner 2 homolog (FGFR1OP2), found in Gallus gallus (Chicken).